We begin with the raw amino-acid sequence, 363 residues long: MEKREDGGILTYDGRYVMYNVLGNIFELSSKYIPPIEPIGRGAYGIVCCATNSETNEEVAIKKIANAFDNRVDAKRTLREIKLLSHMDHDNVIKIKDIIELPEKERFEDVYIVYELMDTDLHQIIRSTQTLTDDHCQYFLYQILRGLKYIHSANVLHRDLKPSNLVLNTNCDLKICDFGLARTSNETEIMTEYVVTRWYRAPELLLNSSEYTGAIDIWSVGCIFMEILRRETLFPGKDYVQQLKLITELLGSPDDSDLDFLRSDNARKYVKQLPHVQKQSFREKFPNISPMALDLAEKMLVFDPSKRITVDEALKQPYLASLHEINEEPTCPTPFSFDFEETALDEQDIKELVWRESLHFKNM.

The Protein kinase domain maps to 33-319 (IPPIEPIGRG…VDEALKQPYL (287 aa)). Residues 39-47 (IGRGAYGIV) and lysine 62 contribute to the ATP site. The active-site Proton acceptor is the aspartate 159. Threonine 191 bears the Phosphothreonine mark. The TXY signature appears at 191–193 (TEY). A Phosphotyrosine modification is found at tyrosine 193. Threonine 196 carries the phosphothreonine modification.

The protein belongs to the protein kinase superfamily. CMGC Ser/Thr protein kinase family. MAP kinase subfamily. As to quaternary structure, interacts with MKK6. Dually phosphorylated on Thr-191 and Tyr-193, which activates the enzyme. As to expression, expressed in roots, stems and flower buds.

It catalyses the reaction L-seryl-[protein] + ATP = O-phospho-L-seryl-[protein] + ADP + H(+). It carries out the reaction L-threonyl-[protein] + ATP = O-phospho-L-threonyl-[protein] + ADP + H(+). Its activity is regulated as follows. Activated by threonine and tyrosine phosphorylation. Activated by the MAP kinase kinase MKK6 in vitro. Functionally, MKK6-MPK13 module positively regulates lateral root formation. This Arabidopsis thaliana (Mouse-ear cress) protein is Mitogen-activated protein kinase 13 (MPK13).